A 147-amino-acid chain; its full sequence is Hemoglobin subunit epsilon (147 aa).

A Globin domain is found at His-3 to His-147. A phosphoserine mark is found at Ser-14 and Ser-51. His-64 and His-93 together coordinate heme b.

Belongs to the globin family. Heterotetramer of two alpha chains and two epsilon chains in early embryonic hemoglobin Gower-2; two zeta chains and two epsilon chains in early embryonic hemoglobin Gower-1. In terms of tissue distribution, red blood cells.

Functionally, the epsilon chain is a beta-type chain of early mammalian embryonic hemoglobin. The polypeptide is Hemoglobin subunit epsilon (HBE1) (Cheirogaleus medius (Fat-tailed dwarf lemur)).